Here is a 471-residue protein sequence, read N- to C-terminus: Collagenase 3 (471 aa).

Residues 1-19 form the signal peptide; that stretch reads MHPGVLAAFLFLSWTHCRA. Positions 20–103 are cleaved as a propeptide — activation peptide; the sequence is LPLPSGGDED…PRCGVPDVGE (84 aa). Residues 94–101 carry the Cysteine switch motif; that stretch reads PRCGVPDV. Cys-96 provides a ligand contact to Zn(2+). Asn-117 carries N-linked (GlcNAc...) asparagine glycosylation. Asp-128 contacts Ca(2+). Asn-152 carries an N-linked (GlcNAc...) asparagine glycan. Asp-162 serves as a coordination point for Ca(2+). Zn(2+) contacts are provided by His-172 and Asp-174. Positions 176–246 are interaction with TIMP2; it reads YPFDGPSGLL…GALMFPIYTY (71 aa). Asp-179, Gly-180, Ser-182, and Leu-184 together coordinate Ca(2+). His-187 serves as a coordination point for Zn(2+). Residues Asn-194, Gly-196, and Asp-198 each coordinate Ca(2+). His-200 provides a ligand contact to Zn(2+). Residues Asp-202, Asp-203, and Glu-205 each coordinate Ca(2+). His-222 is a Zn(2+) binding site. Residue Glu-223 is part of the active site. The Zn(2+) site is built by His-226, His-232, and Met-240. The tract at residues 263 to 284 is disordered; that stretch reads QSLYGPGDEDPNPKHPKTPDKC. An interaction with collagen region spans residues 268 to 471; sequence PGDEDPNPKH…VMPANSILWC (204 aa). Residues 273-284 are compositionally biased toward basic and acidic residues; the sequence is PNPKHPKTPDKC. 4 Hemopexin repeats span residues 281-330, 331-377, 379-427, and 428-471; these read PDKC…WPEL, PNRI…GLPK, VKKI…FPGI, and GDKV…ILWC. Cysteines 284 and 471 form a disulfide. Ca(2+) contacts are provided by Asp-291, Ile-293, Asp-335, and Ala-337. Tyr-366 carries the phosphotyrosine; by PKDCC modification. Ser-383, Ala-385, Asp-432, and Val-434 together coordinate Ca(2+).

Belongs to the peptidase M10A family. As to quaternary structure, monomer. Interacts with TIMP1, TIMP2 and TIMP3. Binds (via the C-terminal region) to collagen. The cofactor is Ca(2+). Requires Zn(2+) as cofactor. In terms of processing, the proenzyme is activated by removal of the propeptide; this cleavage can be effected by other matrix metalloproteinases, such as MMP2, MMP3 and MMP14 and may involve several cleavage steps. Cleavage can also be autocatalytic, after partial maturation by another protease or after treatment with 4-aminophenylmercuric acetate (APMA) (in vitro). Post-translationally, N-glycosylated. Tyrosine phosphorylated by PKDCC/VLK. Detected in fetal cartilage and calvaria, in chondrocytes of hypertrophic cartilage in vertebrae and in the dorsal end of ribs undergoing ossification, as well as in osteoblasts and periosteal cells below the inner periosteal region of ossified ribs. Detected in chondrocytes from in joint cartilage that have been treated with TNF and IL1B, but not in untreated chondrocytes. Detected in T lymphocytes. Detected in breast carcinoma tissue.

The protein resides in the secreted. It is found in the extracellular space. It localises to the extracellular matrix. Its activity is regulated as follows. Inhibited by TIMP1, TIMP2 and TIMP3. Inhibited by acetohydroxamic acid and other zinc chelators. Its function is as follows. Plays a role in the degradation of extracellular matrix proteins including fibrillar collagen, fibronectin, TNC and ACAN. Cleaves triple helical collagens, including type I, type II and type III collagen, but has the highest activity with soluble type II collagen. Can also degrade collagen type IV, type XIV and type X. May also function by activating or degrading key regulatory proteins, such as TGFB1 and CCN2. Plays a role in wound healing, tissue remodeling, cartilage degradation, bone development, bone mineralization and ossification. Required for normal embryonic bone development and ossification. Plays a role in the healing of bone fractures via endochondral ossification. Plays a role in wound healing, probably by a mechanism that involves proteolytic activation of TGFB1 and degradation of CCN2. Plays a role in keratinocyte migration during wound healing. May play a role in cell migration and in tumor cell invasion. This chain is Collagenase 3 (MMP13), found in Homo sapiens (Human).